Consider the following 370-residue polypeptide: N-acetyltaurine hydrolase (370 aa).

The a divalent metal cation site is built by histidine 26, histidine 28, glutamate 189, histidine 221, histidine 250, and aspartate 318.

This sequence belongs to the metallo-dependent hydrolases superfamily. Phosphotriesterase family. Requires a divalent metal cation as cofactor.

It localises to the cytoplasm. It is found in the cytosol. It catalyses the reaction N-acetyltaurine + H2O = taurine + acetate. Functionally, N-acetyltaurine hydrolase catalyzes the hydrolysis of N-acetyltaurine into taurine and acetate. This chain is N-acetyltaurine hydrolase (pter), found in Dictyostelium discoideum (Social amoeba).